Consider the following 595-residue polypeptide: D-xylonate dehydratase (595 aa).

Position 64 (Cys-64) interacts with [2Fe-2S] cluster. Glu-96 contacts Mg(2+). [2Fe-2S] cluster is bound at residue Cys-132. Asp-133 lines the Mg(2+) pocket. Cys-205 contacts [2Fe-2S] cluster. Glu-467 lines the Mg(2+) pocket.

The protein belongs to the IlvD/Edd family. In terms of assembly, homotetramer. Requires [2Fe-2S] cluster as cofactor. It depends on Mg(2+) as a cofactor.

The enzyme catalyses D-xylonate = 2-dehydro-3-deoxy-D-arabinonate + H2O. It catalyses the reaction D-gluconate = 2-dehydro-3-deoxy-D-gluconate + H2O. It participates in carbohydrate metabolism; D-xylose degradation. Catalyzes the dehydration of D-xylonate to 2-dehydro-3-deoxy-D-arabinonate during D-xylose degradation. Can also dehydrate D-gluconate, with similar catalytic efficiency. Has weak activity with D-galactonate, D-fuconate and L-arabinonate. This is D-xylonate dehydratase from Caulobacter vibrioides (strain ATCC 19089 / CIP 103742 / CB 15) (Caulobacter crescentus).